The chain runs to 265 residues: Sarcotoxin II-1 (265 aa).

Positions 1–22 (MKSFVLFAACMAIIALGSLAHA) are cleaved as a signal peptide. Positions 23–24 (YP) are cleaved as a propeptide — removed by a dipeptidylpeptidase. Residue Q25 is modified to Pyrrolidone carboxylic acid. Glycine amide is present on G264.

This sequence belongs to the attacin/sarcotoxin-2 family. As to expression, synthesized by the fat body and is eventually secreted into the hemolymph.

It localises to the secreted. Functionally, sarcotoxin II is an antibacterial protein which plays a role in the inflammatory response of this insect. The main effect of sarcotoxin II on E.coli may be the inhibition of cell wall synthesis, including septum formation. The sequence is that of Sarcotoxin II-1 from Sarcophaga peregrina (Flesh fly).